A 617-amino-acid polypeptide reads, in one-letter code: NADPH-dependent diflavin oxidoreductase 1 (617 aa).

The 145-residue stretch at 3 to 147 folds into the Flavodoxin-like domain; the sequence is PMILYASETG…AFLPWLQQTL (145 aa). FMN-binding positions include 9–14, 56–59, 94–103, and glutamate 129; these read SETGNA, STHG, and LGDSSYERFC. Residues 226–465 enclose the FAD-binding FR-type domain; sequence DDWVWATLKK…HIASPTLFLP (240 aa). Residues 404–407 and 438–441 contribute to the FAD site; these read RQFS and GLCS. Residues threonine 479, 534-535, and 540-544 each bind NADP(+); these read SR and RIYVQ. Tryptophan 617 is an FAD binding site.

The protein belongs to the NADPH-dependent diflavin oxidoreductase NDOR1 family. This sequence in the N-terminal section; belongs to the flavodoxin family. It in the C-terminal section; belongs to the flavoprotein pyridine nucleotide cytochrome reductase family. As to quaternary structure, interacts with DRE2; as part of the cytosolic iron-sulfur (Fe-S) protein assembly (CIA) machinery. Requires FAD as cofactor. FMN is required as a cofactor.

Its subcellular location is the cytoplasm. It localises to the mitochondrion. It carries out the reaction 2 oxidized [2Fe-2S]-[protein] + NADPH = 2 reduced [2Fe-2S]-[protein] + NADP(+) + H(+). In terms of biological role, NADPH-dependent reductase which is a central component of the cytosolic iron-sulfur (Fe-S) protein assembly (CIA) machinery. Transfers electrons from NADPH via its FAD and FMN prosthetic groups to the [2Fe-2S] cluster of DRE2, another key component of the CIA machinery. In turn, this reduced cluster provides electrons for assembly of cytosolic iron-sulfur cluster proteins. Positively controls H(2)O(2)-induced cell death. This is NADPH-dependent diflavin oxidoreductase 1 from Cryptococcus neoformans var. neoformans serotype D (strain B-3501A) (Filobasidiella neoformans).